The chain runs to 60 residues: Cytotoxin 10 (60 aa).

Intrachain disulfides connect Cys-3/Cys-21, Cys-14/Cys-38, Cys-42/Cys-53, and Cys-54/Cys-59.

Belongs to the three-finger toxin family. Short-chain subfamily. Type IA cytotoxin sub-subfamily. As to quaternary structure, monomer in solution; Homodimer and oligomer in the presence of negatively charged lipids forming a pore with a size ranging between 20 and 30 Angstroms. Expressed by the venom gland.

Its subcellular location is the secreted. The protein localises to the target cell membrane. Shows cytolytic activity on many different cells by forming pore in lipid membranes. In vivo, increases heart rate or kills the animal by cardiac arrest. In addition, it binds to heparin with high affinity, interacts with Kv channel-interacting protein 1 (KCNIP1) in a calcium-independent manner, and binds to integrin alpha-V/beta-3 (ITGAV/ITGB3) with moderate affinity. The sequence is that of Cytotoxin 10 from Naja annulifera (Banded Egyptian cobra).